A 146-amino-acid polypeptide reads, in one-letter code: Hemoglobin subunit beta (146 aa).

Positions 2–146 constitute a Globin domain; it reads HWSAEEKQLI…VAHALARKYH (145 aa). His63 and His92 together coordinate heme b.

Belongs to the globin family. Heterotetramer of two alpha chains and two beta chains. In terms of tissue distribution, red blood cells.

In terms of biological role, involved in oxygen transport from the lung to the various peripheral tissues. This is Hemoglobin subunit beta (HBB) from Phoenicopterus ruber (American flamingo).